The following is a 668-amino-acid chain: Fructose-1,6-bisphosphatase class 3 (668 aa).

Belongs to the FBPase class 3 family. Mn(2+) serves as cofactor.

It carries out the reaction beta-D-fructose 1,6-bisphosphate + H2O = beta-D-fructose 6-phosphate + phosphate. It functions in the pathway carbohydrate biosynthesis; gluconeogenesis. In Clostridium botulinum (strain Loch Maree / Type A3), this protein is Fructose-1,6-bisphosphatase class 3.